Reading from the N-terminus, the 511-residue chain is uncharacterized protein (511 aa).

This is an uncharacterized protein from Acanthamoeba polyphaga (Amoeba).